A 462-amino-acid polypeptide reads, in one-letter code: A-type ATP synthase subunit B (462 aa).

This sequence belongs to the ATPase alpha/beta chains family. As to quaternary structure, has multiple subunits with at least A(3), B(3), C, D, E, F, H, I and proteolipid K(x).

It localises to the cell membrane. Component of the A-type ATP synthase that produces ATP from ADP in the presence of a proton gradient across the membrane. The B chain is a regulatory subunit. The sequence is that of A-type ATP synthase subunit B from Methanococcus maripaludis (strain DSM 14266 / JCM 13030 / NBRC 101832 / S2 / LL).